We begin with the raw amino-acid sequence, 311 residues long: Thioredoxin reductase (311 aa).

FAD is bound at residue 35 to 42 (ERGIPGGQ). Residues C134 and C137 are joined by a disulfide bond. An FAD-binding site is contributed by 277-286 (DVRDKGLRQI).

The protein belongs to the class-II pyridine nucleotide-disulfide oxidoreductase family. Homodimer. The cofactor is FAD.

Its subcellular location is the cytoplasm. The catalysed reaction is [thioredoxin]-dithiol + NADP(+) = [thioredoxin]-disulfide + NADPH + H(+). This chain is Thioredoxin reductase (trxB), found in Staphylococcus aureus (strain MRSA252).